The sequence spans 212 residues: Imidazole glycerol phosphate synthase subunit HisH 2 (212 aa).

A Glutamine amidotransferase type-1 domain is found at 3–212 (RVAIIDYGIN…LMSNFLQWNP (210 aa)). Residue Cys82 is the Nucleophile of the active site. Catalysis depends on residues His192 and Glu194.

In terms of assembly, heterodimer of HisH and HisF.

The protein localises to the cytoplasm. It catalyses the reaction 5-[(5-phospho-1-deoxy-D-ribulos-1-ylimino)methylamino]-1-(5-phospho-beta-D-ribosyl)imidazole-4-carboxamide + L-glutamine = D-erythro-1-(imidazol-4-yl)glycerol 3-phosphate + 5-amino-1-(5-phospho-beta-D-ribosyl)imidazole-4-carboxamide + L-glutamate + H(+). It carries out the reaction L-glutamine + H2O = L-glutamate + NH4(+). Its pathway is amino-acid biosynthesis; L-histidine biosynthesis; L-histidine from 5-phospho-alpha-D-ribose 1-diphosphate: step 5/9. Functionally, IGPS catalyzes the conversion of PRFAR and glutamine to IGP, AICAR and glutamate. The HisH subunit provides the glutamine amidotransferase activity that produces the ammonia necessary to HisF for the synthesis of IGP and AICAR. This is Imidazole glycerol phosphate synthase subunit HisH 2 from Nitrobacter winogradskyi (strain ATCC 25391 / DSM 10237 / CIP 104748 / NCIMB 11846 / Nb-255).